Consider the following 186-residue polypeptide: Protein FAM219A (186 aa).

Disordered stretches follow at residues 1–47 (MMEE…NYKP) and 59–132 (ELAR…GYSS). Positions 67-81 (KNGTVGSPVNQQPKK) are enriched in polar residues. Positions 123–132 (SRYSSSGYSS) are enriched in low complexity.

Belongs to the FAM219 family.

In Danio rerio (Zebrafish), this protein is Protein FAM219A (fam219a).